A 248-amino-acid polypeptide reads, in one-letter code: Transcription termination/antitermination protein NusG (248 aa).

Residues 197 to 227 enclose the KOW domain; the sequence is KGDQVRVIEGPFMNFTGTVEEVHPEKRKLTV.

Belongs to the NusG family. Monomer. Homodimer.

In terms of biological role, participates in transcription elongation, termination and antitermination. The sequence is that of Transcription termination/antitermination protein NusG from Aquifex aeolicus (strain VF5).